A 438-amino-acid chain; its full sequence is Exosome complex component RRP45 (438 aa).

Serine 65 is modified (phosphoserine). N6-acetyllysine; alternate is present on lysine 297. Lysine 297 participates in a covalent cross-link: Glycyl lysine isopeptide (Lys-Gly) (interchain with G-Cter in SUMO1); alternate. Lysine 297 participates in a covalent cross-link: Glycyl lysine isopeptide (Lys-Gly) (interchain with G-Cter in SUMO2); alternate. Phosphoserine is present on residues serine 306 and serine 346. Disordered regions lie at residues 337–365 (AQIGDGIENSWGDLEDSEKEEEEEEGGID) and 377–438 (TGEV…RTAN). The span at 349–364 (DLEDSEKEEEEEEGGI) shows a compositional bias: acidic residues. A phosphoserine mark is found at serine 393 and serine 395. Residues 427–438 (QGKRKKKKRTAN) show a composition bias toward basic residues.

Belongs to the RNase PH family. As to quaternary structure, component of the RNA exosome core complex (Exo-9), composed of EXOSC1, EXOSC2, EXOSC3, EXOSC4, EXOSC5, EXOSC6, EXOSC7, EXOSC8 and EXOSC9; within the complex interacts with EXOSC3, EXOSC4, EXOSC5 and DIS3. The catalytically inactive RNA exosome core complex (Exo-9) associates with the catalytic subunit EXOSC10/RRP6. Exo-9 may associate with DIS3 to form the nucleolar exosome complex, or DIS3L to form the cytoplasmic exosome complex. Exo-9 is formed by a hexameric base ring consisting of the heterodimers EXOSC4-EXOSC9, EXOSC5-EXOSC8 and EXOSC6-EXOSC7, and a cap ring consisting of EXOSC1, EXOSC2 and EXOSC3. The RNA exosome complex associates with cofactors C1D/RRP47, MPHOSPH6/MPP6 and MTREX/MTR4. Interacts (via C-terminus region) with SETX (via N-terminus domain); the interaction enhances SETX sumoylation. Interacts with DIS3; the interaction is direct.

The protein localises to the cytoplasm. Its subcellular location is the nucleus. It is found in the nucleolus. It localises to the nucleoplasm. Non-catalytic component of the RNA exosome complex which has 3'-&gt;5' exoribonuclease activity and participates in a multitude of cellular RNA processing and degradation events. In the nucleus, the RNA exosome complex is involved in proper maturation of stable RNA species such as rRNA, snRNA and snoRNA, in the elimination of RNA processing by-products and non-coding 'pervasive' transcripts, such as antisense RNA species and promoter-upstream transcripts (PROMPTs), and of mRNAs with processing defects, thereby limiting or excluding their export to the cytoplasm. The RNA exosome may be involved in Ig class switch recombination (CSR) and/or Ig variable region somatic hypermutation (SHM) by targeting AICDA deamination activity to transcribed dsDNA substrates. In the cytoplasm, the RNA exosome complex is involved in general mRNA turnover and specifically degrades inherently unstable mRNAs containing AU-rich elements (AREs) within their 3' untranslated regions, and in RNA surveillance pathways, preventing translation of aberrant mRNAs. It seems to be involved in degradation of histone mRNA. The catalytic inactive RNA exosome core complex of 9 subunits (Exo-9) is proposed to play a pivotal role in the binding and presentation of RNA for ribonucleolysis, and to serve as a scaffold for the association with catalytic subunits and accessory proteins or complexes. EXOSC9 binds to ARE-containing RNAs. This Mus musculus (Mouse) protein is Exosome complex component RRP45 (Exosc9).